The sequence spans 387 residues: MNIHEYQAKAIFADNGILTLKGKVAFSVDEAVSNAKELGGSVWAVKAQIHAGGRGLGGGVKIAKNLDEVKDYASKILGMNLVTHQTGPEGKLVQKLYIESGANIVKEYYLAILFNRMAEQITIIASSEGGMDIEKVAKESPGKIAKVGIDPQIGFKMFHGLEVARVLGLDKDEGKKLISMIAKLYKLYMDKDMNMLEINPLIKTAEGDFYALDAKCSFDDSALYRHPEIAELRDITEENPAEREAAEFGLSYVKLDGDVACMVNGAGLAMATMDIINYSGAKPANFLDVGGGASPETVAKAFEIILRDKNVKVIFINIFGGIVRCDRIANGILEATKNVEVNIPIVVRLDGTNAAEAKTILDNSNLKNIKAATNLKNGAELVKSLVG.

ATP-binding positions include K46, 53 to 55 (GRG), E99, A102, and E107. 2 residues coordinate Mg(2+): N199 and D213. Substrate-binding positions include N264 and 321–323 (GIV).

It belongs to the succinate/malate CoA ligase beta subunit family. Heterotetramer of two alpha and two beta subunits. The cofactor is Mg(2+).

The catalysed reaction is succinate + ATP + CoA = succinyl-CoA + ADP + phosphate. The enzyme catalyses GTP + succinate + CoA = succinyl-CoA + GDP + phosphate. The protein operates within carbohydrate metabolism; tricarboxylic acid cycle; succinate from succinyl-CoA (ligase route): step 1/1. In terms of biological role, succinyl-CoA synthetase functions in the citric acid cycle (TCA), coupling the hydrolysis of succinyl-CoA to the synthesis of either ATP or GTP and thus represents the only step of substrate-level phosphorylation in the TCA. The beta subunit provides nucleotide specificity of the enzyme and binds the substrate succinate, while the binding sites for coenzyme A and phosphate are found in the alpha subunit. The protein is Succinate--CoA ligase [ADP-forming] subunit beta of Campylobacter jejuni subsp. doylei (strain ATCC BAA-1458 / RM4099 / 269.97).